The chain runs to 900 residues: Nuclear factor NF-kappa-B p100 subunit (900 aa).

A phosphoserine mark is found at S23 and S161. In terms of domain architecture, RHD spans 38 to 343 (PYLVIVEQPK…EVQRKRRKAL (306 aa)). A Nuclear localization signal motif is present at residues 337–341 (RKRRK). The segment at 346–377 (FSQPFGGGSHMGGGSGGAAGGYGGAGGGGSLG) is GRR. Positions 404-435 (GAQMAATVPSRDSGEEAAEPSAPSRTPQCEPQ) are disordered. T429 bears the Phosphothreonine mark. 6 ANK repeats span residues 487–519 (NGDT…DLGV), 526–555 (LHQT…DPAL), 559–591 (HGDS…AVPQ), 599–628 (EGLY…EVEA), 633–663 (GGRT…NVNA), and 667–696 (AGNT…DIHA). The interval 698-734 (NEEPLCPLPSPPTSDSDSDSEGPEKDTRSSFRGHTPL) is disordered. Phosphoserine occurs at positions 713, 715, and 717. Residues 729–758 (RGHTPLDLTCSTKVKTLLLNAAQNTMEPPL) form an ANK 7 repeat. Residues 764–851 (AGPGLSLGDT…EGVRLLRGPE (88 aa)) form the Death domain. A Phosphoserine modification is found at S812. A compositionally biased stretch (basic and acidic residues) spans 849 to 866 (GPETRDKLPSTAEVKEDS). The segment at 849 to 900 (GPETRDKLPSTAEVKEDSAYGSQSVEQEAEKLGPPPEPPGGLCHGHPQPQVH) is disordered. Residue K855 forms a Glycyl lysine isopeptide (Lys-Gly) (interchain with G-Cter in ubiquitin) linkage. 2 positions are modified to phosphoserine; by MAP3K14: S866 and S870. Residues 888-900 (GGLCHGHPQPQVH) are compositionally biased toward low complexity.

As to quaternary structure, component of the NF-kappa-B RelB-p52 complex. Homodimer; component of the NF-kappa-B p52-p52 complex. Component of the NF-kappa-B p65-p52 complex. Component of the NF-kappa-B p52-c-Rel complex. NFKB2/p52 interacts with NFKBIE. Component of a complex consisting of the NF-kappa-B p50-p50 homodimer and BCL3. Directly interacts with MEN1. In terms of processing, while translation occurs, the particular unfolded structure after the GRR repeat promotes the generation of p52 making it an acceptable substrate for the proteasome. This process is known as cotranslational processing. The processed form is active and the unprocessed form acts as an inhibitor (I kappa B-like), being able to form cytosolic complexes with NF-kappa B, trapping it in the cytoplasm. Complete folding of the region downstream of the GRR repeat precludes processing. Post-translationally, subsequent to MAP3K14-dependent serine phosphorylation, p100 polyubiquitination occurs then triggering its proteasome-dependent processing. Constitutive processing is tightly suppressed by its C-terminal processing inhibitory domain, named PID, which contains the death domain. In terms of processing, ubiquitinated by TRIM55; leading to processing by VCP and subsequent ubiquitin-dependent protein degradation by the proteasome.

Its subcellular location is the nucleus. The protein resides in the cytoplasm. Its function is as follows. NF-kappa-B is a pleiotropic transcription factor present in almost all cell types and is the endpoint of a series of signal transduction events that are initiated by a vast array of stimuli related to many biological processes such as inflammation, immunity, differentiation, cell growth, tumorigenesis and apoptosis. NF-kappa-B is a homo- or heterodimeric complex formed by the Rel-like domain-containing proteins RELA/p65, RELB, NFKB1/p105, NFKB1/p50, REL and NFKB2/p52. The dimers bind at kappa-B sites in the DNA of their target genes and the individual dimers have distinct preferences for different kappa-B sites that they can bind with distinguishable affinity and specificity. Different dimer combinations act as transcriptional activators or repressors, respectively. NF-kappa-B is controlled by various mechanisms of post-translational modification and subcellular compartmentalization as well as by interactions with other cofactors or corepressors. NF-kappa-B complexes are held in the cytoplasm in an inactive state complexed with members of the NF-kappa-B inhibitor (I-kappa-B) family. In a conventional activation pathway, I-kappa-B is phosphorylated by I-kappa-B kinases (IKKs) in response to different activators, subsequently degraded thus liberating the active NF-kappa-B complex which translocates to the nucleus. In a non-canonical activation pathway, the MAP3K14-activated CHUK/IKKA homodimer phosphorylates NFKB2/p100 associated with RelB, inducing its proteolytic processing to NFKB2/p52 and the formation of NF-kappa-B RelB-p52 complexes. The NF-kappa-B heterodimeric RelB-p52 complex is a transcriptional activator. The NF-kappa-B p52-p52 homodimer is a transcriptional repressor. NFKB2 appears to have dual functions such as cytoplasmic retention of attached NF-kappa-B proteins by p100 and generation of p52 by a cotranslational processing. The proteasome-mediated process ensures the production of both p52 and p100 and preserves their independent function. p52 binds to the kappa-B consensus sequence 5'-GGRNNYYCC-3', located in the enhancer region of genes involved in immune response and acute phase reactions. p52 and p100 are respectively the minor and major form; the processing of p100 being relatively poor. Isoform p49 is a subunit of the NF-kappa-B protein complex, which stimulates the HIV enhancer in synergy with p65. In concert with RELB, regulates the circadian clock by repressing the transcriptional activator activity of the CLOCK-BMAL1 heterodimer. The chain is Nuclear factor NF-kappa-B p100 subunit (NFKB2) from Homo sapiens (Human).